The primary structure comprises 99 residues: Class II hydrophobin 1 (99 aa).

The N-terminal stretch at 1–26 (MKFIAVVAALTASLAMAAPTESSTDT) is a signal peptide. 4 disulfides stabilise this stretch: Cys31–Cys80, Cys41–Cys71, Cys42–Cys54, and Cys81–Cys92.

It belongs to the cerato-ulmin hydrophobin family. Homotetramer. Further self-assembles to form highly ordered films at water-air interfaces through intermolecular interactions.

The protein resides in the secreted. It is found in the cell wall. Functionally, aerial growth, conidiation, and dispersal of filamentous fungi in the environment rely upon a capability of their secreting small amphipathic proteins called hydrophobins (HPBs) with low sequence identity. Class I can self-assemble into an outermost layer of rodlet bundles on aerial cell surfaces, conferring cellular hydrophobicity that supports fungal growth, development and dispersal; whereas Class II form highly ordered films at water-air interfaces through intermolecular interactions but contribute nothing to the rodlet structure. HFB1 is a class II hydrophobin that shows antifungal activity against pathogenic and opportunistic fungi such as Cryptococcus neoformans, Nakaseomyces glabrataa, or Candida tropicalis. The sequence is that of Class II hydrophobin 1 from Sodiomyces alkalinus (strain CBS 110278 / VKM F-3762 / F11) (Alkaliphilic filamentous fungus).